Reading from the N-terminus, the 98-residue chain is C-X-C motif chemokine 10 (98 aa).

Residues 1–21 (MNPSAAVIFCLILLGLSGTQG) form the signal peptide. Arginine 26 carries the post-translational modification Citrulline. Intrachain disulfides connect cysteine 30–cysteine 57 and cysteine 32–cysteine 74.

Belongs to the intercrine alpha (chemokine CxC) family. Monomer, dimer, and tetramer. Interacts with CXCR3 (via N-terminus). Expressed in the spleen, thymus, lymph nodes and liver. Expressed in astrocytes, microglia, and neurons.

It localises to the secreted. In terms of biological role, pro-inflammatory cytokine that is involved in a wide variety of processes such as chemotaxis, differentiation, and activation of peripheral immune cells, regulation of cell growth, apoptosis and modulation of angiostatic effects. Plays thereby an important role during viral infections by stimulating the activation and migration of immune cells to the infected sites. Mechanistically, binding of CXCL10 to the CXCR3 receptor activates G protein-mediated signaling and results in downstream activation of phospholipase C-dependent pathway, an increase in intracellular calcium production and actin reorganization. In turn, recruitment of activated Th1 lymphocytes occurs at sites of inflammation. Activation of the CXCL10/CXCR3 axis also plays an important role in neurons in response to brain injury for activating microglia, the resident macrophage population of the central nervous system, and directing them to the lesion site. This recruitment is an essential element for neuronal reorganization. The polypeptide is C-X-C motif chemokine 10 (Cxcl10) (Mus musculus (Mouse)).